The sequence spans 119 residues: MRHYEIVFMVHPDQSEQVPSMIERYTGIVESNGGKVHRLEDWGRRQLAYPINKLIKAHYVLMNVECGKDELDELESLFRFNDAVIRNMVLGRDEAVTEPSPLARSQEKDEEEGGRTAEA.

The interval 96 to 119 is disordered; it reads VTEPSPLARSQEKDEEEGGRTAEA.

Belongs to the bacterial ribosomal protein bS6 family.

In terms of biological role, binds together with bS18 to 16S ribosomal RNA. This Alkalilimnicola ehrlichii (strain ATCC BAA-1101 / DSM 17681 / MLHE-1) protein is Small ribosomal subunit protein bS6.